Here is a 413-residue protein sequence, read N- to C-terminus: N5-carboxyaminoimidazole ribonucleotide synthase (413 aa).

Residues 1–21 are disordered; it reads MKRVSEQAGNPDGNPQAHVPG. ATP-binding positions include lysine 122, lysine 162, 199-202, glutamate 207, and 289-290; these read EEKV and NE. The region spanning 126–319 is the ATP-grasp domain; it reads RERLAELGAP…QFEQHLRAVM (194 aa).

Belongs to the PurK/PurT family. As to quaternary structure, homodimer.

It catalyses the reaction 5-amino-1-(5-phospho-beta-D-ribosyl)imidazole + hydrogencarbonate + ATP = 5-carboxyamino-1-(5-phospho-D-ribosyl)imidazole + ADP + phosphate + 2 H(+). It participates in purine metabolism; IMP biosynthesis via de novo pathway; 5-amino-1-(5-phospho-D-ribosyl)imidazole-4-carboxylate from 5-amino-1-(5-phospho-D-ribosyl)imidazole (N5-CAIR route): step 1/2. Catalyzes the ATP-dependent conversion of 5-aminoimidazole ribonucleotide (AIR) and HCO(3)(-) to N5-carboxyaminoimidazole ribonucleotide (N5-CAIR). This chain is N5-carboxyaminoimidazole ribonucleotide synthase, found in Corynebacterium ammoniagenes (Brevibacterium ammoniagenes).